Reading from the N-terminus, the 439-residue chain is Methionine aminopeptidase 2-2 (439 aa).

Residues 1–90 (MAAQTTEKLD…RVPVSNLFPN (90 aa)) are disordered. Residues 28–41 (EAEEDSDDAQDEGA) show a composition bias toward acidic residues. The span at 56-72 (KKKKKKKPKKKSKKKGG) shows a compositional bias: basic residues. Histidine 196 provides a ligand contact to substrate. Positions 216, 227, and 296 each coordinate a divalent metal cation. Histidine 304 is a substrate binding site. Positions 329 and 424 each coordinate a divalent metal cation.

The protein belongs to the peptidase M24A family. Methionine aminopeptidase eukaryotic type 2 subfamily. Requires Co(2+) as cofactor. Zn(2+) is required as a cofactor. Mn(2+) serves as cofactor. The cofactor is Fe(2+).

It is found in the cytoplasm. The enzyme catalyses Release of N-terminal amino acids, preferentially methionine, from peptides and arylamides.. Functionally, cotranslationally removes the N-terminal methionine from nascent proteins. The N-terminal methionine is often cleaved when the second residue in the primary sequence is small and uncharged (Met-Ala-, Cys, Gly, Pro, Ser, Thr, or Val). In Penicillium rubens (strain ATCC 28089 / DSM 1075 / NRRL 1951 / Wisconsin 54-1255) (Penicillium chrysogenum), this protein is Methionine aminopeptidase 2-2.